Consider the following 376-residue polypeptide: Zinc transporter 7 (376 aa).

At 1–37 the chain is on the cytoplasmic side; that stretch reads MLPLSIKDDEYKPPKFNLFRKISGWFRSILSDKTSRN. A helical membrane pass occupies residues 38–58; that stretch reads LFFFLCLNLSFAFVELLYGIW. Residues 59 to 67 lie on the Lumenal side of the membrane; it reads SNCLGLISD. The chain crosses the membrane as a helical span at residues 68–88; that stretch reads SFHMFFDSTAILAGLAASVIS. The Cytoplasmic segment spans residues 89–102; the sequence is KWRDNDAFSYGYVR. Residues 103–123 traverse the membrane as a helical segment; sequence AEVLAGFVNGLFLIFTAFFIF. Residues 124–140 are Lumenal-facing; that stretch reads SEGVERALAPPDVHHER. A helical transmembrane segment spans residues 141 to 161; sequence LLLVSILGFVVNLVGIFVFKH. The his-rich loop stretch occupies residues 161 to 218; the sequence is HGGHGHSHGSGHGHSHSLFNGALDQTHGHGDHCHSHELKHGAAHSHDHAHGHGHFHSH. Residues 162 to 236 are Cytoplasmic-facing; sequence GGHGHSHGSG…TGPSRQILQG (75 aa). The span at 188 to 222 shows a compositional bias: basic and acidic residues; it reads GHGDHCHSHELKHGAAHSHDHAHGHGHFHSHDGPS. The disordered stretch occupies residues 188–226; sequence GHGDHCHSHELKHGAAHSHDHAHGHGHFHSHDGPSLKET. A helical membrane pass occupies residues 237–257; sequence VFLHILADTLGSIGVIASAIM. At 258-262 the chain is on the lumenal side; the sequence is MQNFG. Residues 263-283 traverse the membrane as a helical segment; the sequence is LMIADPICSILIAMLIVISVI. The Cytoplasmic segment spans residues 284–376; it reads PLLRESVGIL…LYVQIDFAAM (93 aa).

It belongs to the cation diffusion facilitator (CDF) transporter (TC 2.A.4) family. SLC30A subfamily. Homooligomer.

It localises to the golgi apparatus membrane. The protein resides in the cytoplasmic vesicle. Its subcellular location is the golgi apparatus. It is found in the trans-Golgi network. The protein localises to the sarcoplasmic reticulum. It localises to the mitochondrion. It catalyses the reaction Zn(2+)(in) = Zn(2+)(out). Its function is as follows. Zinc ion transporter mediating zinc entry from the cytosol into the lumen of organelles along the secretory pathway. By contributing to zinc ion homeostasis within the early secretory pathway, regulates the activation and folding of enzymes like alkaline phosphatases. This is Zinc transporter 7 (SLC30A7) from Bos taurus (Bovine).